Reading from the N-terminus, the 61-residue chain is Beta-insect depressant toxin BmKIT2 (61 aa).

An LCN-type CS-alpha/beta domain is found at 1-61; sequence DGYIKGKSGC…TWKSESNTCG (61 aa). 4 disulfides stabilise this stretch: Cys-10–Cys-60, Cys-14–Cys-35, Cys-21–Cys-42, and Cys-25–Cys-44. Residue Gly-61 is modified to Glycine amide.

This sequence belongs to the long (4 C-C) scorpion toxin superfamily. Sodium channel inhibitor family. Beta subfamily. Expressed by the venom gland.

The protein resides in the secreted. Functionally, on insects, this depressant beta-toxins cause a transient contraction paralysis followed by a slow flaccid paralysis. They bind voltage-independently at site-4 of sodium channels (Nav) and shift the voltage of activation toward more negative potentials thereby affecting sodium channel activation and promoting spontaneous and repetitive firing. This toxin is active against insects and mammals. It is capable of binding to not only cockroach neuronal membranes, but also rat cerebrocortical and hippocampal synaptosomes. This toxin also has potent peripheral and central suppressive effects on rat nociceptive spontaneous responses, thermal hyperalgesia and spinal c-Fos expression induced by formalin and carrageenan, which may be derived from its modulation on the activity of sodium channels of the neurons. Administration of BmKIT2 into rat brain can also suppress the epileptic seizures significantly. The polypeptide is Beta-insect depressant toxin BmKIT2 (Olivierus martensii (Manchurian scorpion)).